The sequence spans 120 residues: UPF0231 protein YacL (120 aa).

It belongs to the UPF0231 family.

This Escherichia coli O81 (strain ED1a) protein is UPF0231 protein YacL.